Consider the following 456-residue polypeptide: Exodeoxyribonuclease 7 large subunit (456 aa).

This sequence belongs to the XseA family. Heterooligomer composed of large and small subunits.

The protein localises to the cytoplasm. It carries out the reaction Exonucleolytic cleavage in either 5'- to 3'- or 3'- to 5'-direction to yield nucleoside 5'-phosphates.. Bidirectionally degrades single-stranded DNA into large acid-insoluble oligonucleotides, which are then degraded further into small acid-soluble oligonucleotides. The polypeptide is Exodeoxyribonuclease 7 large subunit (Lactobacillus delbrueckii subsp. bulgaricus (strain ATCC 11842 / DSM 20081 / BCRC 10696 / JCM 1002 / NBRC 13953 / NCIMB 11778 / NCTC 12712 / WDCM 00102 / Lb 14)).